Reading from the N-terminus, the 59-residue chain is Mu-conotoxin SrVA (59 aa).

The first 22 residues, 1 to 22 (MRCLPVFVILLLLIASAPSVDA), serve as a signal peptide directing secretion. The propeptide occupies 23–44 (QLKTKDDVPLASFHDNAKGTQH). Disulfide bonds link cysteine 51–cysteine 58 and cysteine 52–cysteine 59.

The protein belongs to the conotoxin T superfamily. Expressed by the venom duct.

Its subcellular location is the secreted. Functionally, mu-conotoxins block voltage-gated sodium channels. This peptide inhibits the cardiac sodium channel hNav1.5/SCN5A (33% inhibition at 200 nM, 50% at 400 nM, and 55% at 600 nM). Does not interfere with the voltage-dependence of activation, but affects the voltage-dependence of inactivation of hNav1.5. In vivo, intracranial injection into 9-day-old mice causes transient symptoms, including extension of the body and clockwise and counter-clockwise turns, that last 3 to 4 minutes. Intracranial injection into 16-day-old mice, causes transient symptoms, including agitated breathing and occasional turning followed by scratching and grooming behavior, that last for 15-19 minutes. The polypeptide is Mu-conotoxin SrVA (Conus spurius (Alphabet cone)).